The sequence spans 236 residues: Flagellar L-ring protein (236 aa).

A signal peptide spans 1-16; it reads MRMQLTAVLAASLLAG. Residue Cys-17 is the site of N-palmitoyl cysteine attachment. The S-diacylglycerol cysteine moiety is linked to residue Cys-17.

This sequence belongs to the FlgH family. The basal body constitutes a major portion of the flagellar organelle and consists of four rings (L,P,S, and M) mounted on a central rod.

The protein localises to the cell outer membrane. It is found in the bacterial flagellum basal body. Functionally, assembles around the rod to form the L-ring and probably protects the motor/basal body from shearing forces during rotation. The polypeptide is Flagellar L-ring protein (Sinorhizobium fredii (strain NBRC 101917 / NGR234)).